We begin with the raw amino-acid sequence, 414 residues long: Ribulose bisphosphate carboxylase large chain (414 aa).

Substrate-binding residues include N100 and T150. Residue K152 is the Proton acceptor of the active site. K154 is a substrate binding site. Residues K178, D180, and E181 each contribute to the Mg(2+) site. At K178 the chain carries N6-carboxylysine. H271 (proton acceptor) is an active-site residue. R272, H304, and S356 together coordinate substrate.

Belongs to the RuBisCO large chain family. Type I subfamily. In terms of assembly, heterohexadecamer of 8 large chains and 8 small chains; disulfide-linked. The disulfide link is formed within the large subunit homodimers. The cofactor is Mg(2+). Post-translationally, the disulfide bond which can form in the large chain dimeric partners within the hexadecamer appears to be associated with oxidative stress and protein turnover.

It localises to the plastid. The protein resides in the chloroplast. It catalyses the reaction 2 (2R)-3-phosphoglycerate + 2 H(+) = D-ribulose 1,5-bisphosphate + CO2 + H2O. The catalysed reaction is D-ribulose 1,5-bisphosphate + O2 = 2-phosphoglycolate + (2R)-3-phosphoglycerate + 2 H(+). RuBisCO catalyzes two reactions: the carboxylation of D-ribulose 1,5-bisphosphate, the primary event in carbon dioxide fixation, as well as the oxidative fragmentation of the pentose substrate in the photorespiration process. Both reactions occur simultaneously and in competition at the same active site. The protein is Ribulose bisphosphate carboxylase large chain (rbcL) of Blechnopsis orientalis (Fish fern).